The following is a 618-amino-acid chain: MTQEYDNKRPVLVLQNEALYPQRRSYTSEDEAWKSFLENPLTAATKAMMSINGDEDSAAALGLLYDYYKVPRERRSSAVKPEGEHPEPEHSKRNSIPNVTEQPLISAGENRVQVLKNVPFNIVLPHSNQLGIDKRGHLTAPDTTVTVSIATMPTHSIKTEIQPHGFAVGIPPAVYHSEPTERVVVFDRSLSTDQFSSGTQPPNAQRRTPDSTFSETFKEGVQEVFFPSELSLRMPGMNSEDYVFDNVSGNNFEYTLEASKSLRQKQGDSTMTYLNKGQFYPVTLKEGSSNEGIHHPISKVRSVIMVVFAEDKSREDQLRHWKYWHSRQHTAKQRCIDIADYKESFNTISNIEEIAYNAISFTWDINDEAKVFISVNCLSTDFSSQKGVKGLPLNIQIDTYSYNNRSNKPVHRAYCQIKVFCDKGAERKIRDEERKQSKRKVSDVKVQLLPSHKRTDITVFKPFLDLDTQPVLFIPDVHFTNLQRGSHVLSLPSEELEGEGSVLKRGPFGTEDDFGVPPPAKLTRTEEPKRVLLYVRKESEEVFDALMLKTPSLKGLMEAISDKYDVPHDKIGKIFKKCKKGILVNMDDNIVKHYSNEDTFQLQIEEAGGSYKLTLTEI.

Residues 1–91 (MTQEYDNKRP…EGEHPEPEHS (91 aa)) are transcription activation. Residues 76–92 (SSAVKPEGEHPEPEHSK) show a composition bias toward basic and acidic residues. The interval 76-100 (SSAVKPEGEHPEPEHSKRNSIPNVT) is disordered. T208 is subject to Phosphothreonine. Residues 248-474 (SGNNFEYTLE…DLDTQPVLFI (227 aa)) enclose the Grh/CP2 DB domain. 2 interaction with DNA regions span residues 380–389 (TDFSSQKGVK) and 427–430 (RKIR).

The protein belongs to the grh/CP2 family. Grainyhead subfamily. In terms of assembly, binds DNA as homodimer. Homodimer, also forms heterodimers with GRHL2 or GRHL3. In terms of processing, methylation at Arg-9 and Lys-116 may be involved in regulating transcriptional activation. In terms of tissue distribution, isoform 1 is highly expressed in brain, pancreas, tonsil, placenta and kidney. Isoform 2 is highly expressed in brain and liver. Expression in the skin is confined to the suprabasal layers of the epidermis and to the hair follicles.

The protein localises to the nucleus. Transcription factor involved in epithelial development. Binds directly to the consensus DNA sequence 5'-AACCGGTT-3'. Important regulator of DSG1 in the context of hair anchorage and epidermal differentiation, participates in the maintenance of the skin barrier. There is no genetic interaction with GRHL3, nor functional cooperativity due to diverse target gene selectivity during epithelia development. May play a role in regulating glucose homeostasis and insulin signaling. The polypeptide is Grainyhead-like protein 1 homolog (Mus musculus (Mouse)).